The chain runs to 82 residues: Large ribosomal subunit protein bL31B (82 aa).

Belongs to the bacterial ribosomal protein bL31 family. Type B subfamily. In terms of assembly, part of the 50S ribosomal subunit after the end of exponential growth.

Its function is as follows. While neither of the L31 paralogs is essential, this protein does not seem to function as the main L31 protein. Has a higher affinity for 70S ribosomes than the zinc-containing L31 paralog; is able to displace it to varying extents, even under zinc-replete conditions. In Bacillus subtilis (strain 168), this protein is Large ribosomal subunit protein bL31B (rpmE2).